A 135-amino-acid chain; its full sequence is Photosystem II extrinsic protein U (135 aa).

The first 26 residues, 1–26 (MKNLVRLLAVIALIIGSFWGKVPAQA), serve as a signal peptide directing secretion.

It belongs to the PsbU family. PSII is composed of 1 copy each of membrane proteins PsbA, PsbB, PsbC, PsbD, PsbE, PsbF, PsbH, PsbI, PsbJ, PsbK, PsbL, PsbM, PsbT, PsbX, PsbY, PsbZ, Psb30/Ycf12, peripheral proteins PsbO, CyanoQ (PsbQ), PsbU, PsbV and a large number of cofactors. It forms dimeric complexes.

The protein resides in the cellular thylakoid membrane. Functionally, one of the extrinsic, lumenal subunits of photosystem II (PSII). PSII is a light-driven water plastoquinone oxidoreductase, using light energy to abstract electrons from H(2)O, generating a proton gradient subsequently used for ATP formation. The extrinsic proteins stabilize the structure of photosystem II oxygen-evolving complex (OEC), the ion environment of oxygen evolution and protect the OEC against heat-induced inactivation. The protein is Photosystem II extrinsic protein U of Microcystis aeruginosa (strain NIES-843 / IAM M-2473).